Here is a 461-residue protein sequence, read N- to C-terminus: D-arabinono-1,4-lactone oxidase (461 aa).

Residues 24 to 194 (FSAISLGLRC…VDITISVVPA (171 aa)) enclose the FAD-binding PCMH-type domain. H61 carries the pros-8alpha-FAD histidine modification.

This sequence belongs to the oxygen-dependent FAD-linked oxidoreductase family. It depends on FAD as a cofactor.

Its subcellular location is the mitochondrion membrane. The enzyme catalyses D-arabinono-1,4-lactone + O2 = dehydro-D-arabinono-1,4-lactone + H2O2 + H(+). It participates in cofactor biosynthesis; D-erythroascorbate biosynthesis; dehydro-D-arabinono-1,4-lactone from D-arabinose: step 2/2. This Schizosaccharomyces pombe (strain 972 / ATCC 24843) (Fission yeast) protein is D-arabinono-1,4-lactone oxidase (alo1).